Here is a 456-residue protein sequence, read N- to C-terminus: Senecionine N-oxygenase (456 aa).

An N-terminal signal peptide occupies residues 1-22; it reads MFRKFVIMLVLSLLVAAGISQA. 32–37 provides a ligand contact to FAD; that stretch reads GAGYSG. Residue 215 to 220 coordinates NADP(+); the sequence is GAGPSG.

The protein belongs to the FMO family. In terms of assembly, homotetramer. The cofactor is FAD. Hemolymph.

The protein localises to the secreted. It carries out the reaction senecionine + NADPH + O2 = senecionine N-oxide + NADP(+) + H2O. Its function is as follows. NADPH-dependent monooxygenase that detoxifies senecionine and similar plant alkaloids that are ingested by the larvae. Is active towards a narrow range of related substrates with highest activity towards senecionine, followed by seneciphylline, retrorsine, monocrotaline, senecivernine, axillarine and axillaridine. The sequence is that of Senecionine N-oxygenase (sno1) from Tyria jacobaeae (Cinnabar moth).